A 74-amino-acid chain; its full sequence is Large ribosomal subunit protein uL30 (74 aa).

It belongs to the universal ribosomal protein uL30 family. Part of the 50S ribosomal subunit.

The protein is Large ribosomal subunit protein uL30 of Micrococcus luteus (strain ATCC 4698 / DSM 20030 / JCM 1464 / CCM 169 / CCUG 5858 / IAM 1056 / NBRC 3333 / NCIMB 9278 / NCTC 2665 / VKM Ac-2230) (Micrococcus lysodeikticus).